A 358-amino-acid chain; its full sequence is Methionine aminopeptidase 2 (358 aa).

His109 contacts substrate. The a divalent metal cation site is built by Asp130, Asp141, and His210. Residue His218 participates in substrate binding. The a divalent metal cation site is built by Glu243 and Glu339.

Belongs to the peptidase M24A family. Methionine aminopeptidase eukaryotic type 2 subfamily. It depends on Co(2+) as a cofactor. Requires Zn(2+) as cofactor. Mn(2+) serves as cofactor. The cofactor is Fe(2+).

It is found in the cytoplasm. The catalysed reaction is Release of N-terminal amino acids, preferentially methionine, from peptides and arylamides.. Its function is as follows. Cotranslationally removes the N-terminal methionine from nascent proteins. The N-terminal methionine is often cleaved when the second residue in the primary sequence is small and uncharged (Met-Ala-, Cys, Gly, Pro, Ser, Thr, or Val). In Encephalitozoon intestinalis (strain ATCC 50506) (Microsporidian parasite), this protein is Methionine aminopeptidase 2.